The sequence spans 364 residues: MDRAALLALPSLCALWAAVLSLLPCGTQGNWMWLGIASFGVPEKLGCADLPLNSRQKELCKRKPYLLPSIREGARLGIQECRSQFRHERWNCMVATTTSTQLATAPLFGYELSSGTKETAFIYAIMAAGLVHSVTRSCSAGNMTECSCDTTLQNGGSPSEGWHWGGCSDDVQYGMWFSRKFLDLPIRNTTGKESRVLLAMNLHNNEAGRQAVAKLMSVDCRCHGVSGSCAVKTCWKTMSSFEKIGHFLKDKYENSIQISDKTKRKMRRREKDQRQTPILKDDLLYVHKSPNYCVENKKLGIPGTQGRECNRTSGGADGCNLLCCGRGYNTHVVRHVERCECKFIWCCYVRCRRCESMTDVHTCK.

The N-terminal stretch at 1–29 is a signal peptide; the sequence is MDRAALLALPSLCALWAAVLSLLPCGTQG. Intrachain disulfides connect Cys81-Cys92, Cys138-Cys146, and Cys148-Cys167. N-linked (GlcNAc...) asparagine glycosylation occurs at Asn142. Asn188 carries N-linked (GlcNAc...) asparagine glycosylation. 8 disulfide bridges follow: Cys220–Cys234, Cys222–Cys229, Cys293–Cys324, Cys309–Cys319, Cys323–Cys363, Cys339–Cys354, Cys341–Cys351, and Cys346–Cys347. Ser226 is lipidated: O-palmitoleoyl serine; by PORCN. Residue Asn310 is glycosylated (N-linked (GlcNAc...) asparagine).

It belongs to the Wnt family. In terms of processing, palmitoleoylation is required for efficient binding to frizzled receptors. Depalmitoleoylation leads to Wnt signaling pathway inhibition.

It localises to the secreted. Its subcellular location is the extracellular space. The protein resides in the extracellular matrix. Its function is as follows. Ligand for members of the frizzled family of seven transmembrane receptors. Probable developmental protein. May be a signaling molecule which affects the development of discrete regions of tissues. Is likely to signal over only few cell diameters. This chain is Protein Wnt-16 (Wnt16), found in Mus musculus (Mouse).